Consider the following 192-residue polypeptide: Elongation factor P (192 aa).

An N6-(3,6-diaminohexanoyl)-5-hydroxylysine modification is found at K37.

This sequence belongs to the elongation factor P family. May be beta-lysylated on the epsilon-amino group of Lys-37 by the combined action of EpmA and EpmB, and then hydroxylated on the C5 position of the same residue by EpmC (if this protein is present). Lysylation is critical for the stimulatory effect of EF-P on peptide-bond formation. The lysylation moiety may extend toward the peptidyltransferase center and stabilize the terminal 3-CCA end of the tRNA. Hydroxylation of the C5 position on Lys-37 may allow additional potential stabilizing hydrogen-bond interactions with the P-tRNA.

The protein resides in the cytoplasm. It functions in the pathway protein biosynthesis; polypeptide chain elongation. Involved in peptide bond synthesis. Alleviates ribosome stalling that occurs when 3 or more consecutive Pro residues or the sequence PPG is present in a protein, possibly by augmenting the peptidyl transferase activity of the ribosome. Modification of Lys-37 is required for alleviation. The polypeptide is Elongation factor P (Acinetobacter baylyi (strain ATCC 33305 / BD413 / ADP1)).